We begin with the raw amino-acid sequence, 245 residues long: Uridylate kinase (245 aa).

Position 18-21 (18-21) interacts with ATP; sequence KLSG. Glycine 60 is a UMP binding site. The ATP site is built by glycine 61 and arginine 65. Residues aspartate 80 and 141-148 contribute to the UMP site; that span reads TGNPFFTT. Residues threonine 168, tyrosine 174, and aspartate 177 each coordinate ATP.

Belongs to the UMP kinase family. In terms of assembly, homohexamer.

It is found in the cytoplasm. The enzyme catalyses UMP + ATP = UDP + ADP. It participates in pyrimidine metabolism; CTP biosynthesis via de novo pathway; UDP from UMP (UMPK route): step 1/1. Its activity is regulated as follows. Inhibited by UTP. In terms of biological role, catalyzes the reversible phosphorylation of UMP to UDP. This Pseudomonas aeruginosa (strain UCBPP-PA14) protein is Uridylate kinase.